We begin with the raw amino-acid sequence, 525 residues long: Glutathione hydrolase-like YwrD proenzyme (525 aa).

Threonine 339 (nucleophile) is an active-site residue.

The protein belongs to the gamma-glutamyltransferase family. This enzyme consists of two polypeptide chains, which are synthesized from a single polypeptide. In terms of processing, cleaved by autocatalysis into a large and a small subunit.

The enzyme catalyses an N-terminal (5-L-glutamyl)-[peptide] + an alpha-amino acid = 5-L-glutamyl amino acid + an N-terminal L-alpha-aminoacyl-[peptide]. It carries out the reaction glutathione + H2O = L-cysteinylglycine + L-glutamate. It catalyses the reaction an S-substituted glutathione + H2O = an S-substituted L-cysteinylglycine + L-glutamate. In terms of biological role, overexpressed protein with an N-terminal His tag has been reported not to hydrolyze glutathione; it is not clear if the construct is processed to 2 subunits. The polypeptide is Glutathione hydrolase-like YwrD proenzyme (ywrD) (Bacillus subtilis (strain 168)).